A 199-amino-acid polypeptide reads, in one-letter code: N-(5'-phosphoribosyl)anthranilate isomerase (199 aa).

This sequence belongs to the TrpF family.

It catalyses the reaction N-(5-phospho-beta-D-ribosyl)anthranilate = 1-(2-carboxyphenylamino)-1-deoxy-D-ribulose 5-phosphate. The protein operates within amino-acid biosynthesis; L-tryptophan biosynthesis; L-tryptophan from chorismate: step 3/5. The polypeptide is N-(5'-phosphoribosyl)anthranilate isomerase (Campylobacter jejuni subsp. jejuni serotype O:6 (strain 81116 / NCTC 11828)).